Consider the following 606-residue polypeptide: MSPPRRVSFPPDTLQEDPPLADSPLSSPKLPEYDRQSSSTPIVSSNLPTDTTNSASAGPRRRQQPSRQVTLDASPPSATRRETTESARTQRSRAGSRRTSNSLDPNPGLMRRVTTVLFTPPKKIGKAPTYWGSMKAAITSTWLNVLLVFIPIGWALYLAKHNGGKDSISDTAVFCCTFIAIIPLAGLLGFATEEAALRLGQTLGGLLNATLGNAVELIVAILALIKCELQVVQSSLVGSILSNILLVLGMCFFAGGVRFAEQAIKSTAAQLNASLLLIAVIAVLIPSAFHFSISSSTSNTDASELANGEGADLLSMSHAVSILLLILYLGYLLFQMWTHATYYVDDAVTGSTQYPEAITNVSEKLKFRNFHRRKHDEEESYSTATTVSDAAVPPSARAEGGEVPATHGPGTAAAETGNRVEHEDAEEEEEEETPQMNVVCTIALMVIDTVLVGVTAEFLVDSINGMVESNPSLSAEWVGLILLPIVGNAAEHFTAVSVSVKDKLDLSISVAVGSSIQIALFVIPVIELLAWTIGKPMTLLFDPYESIVLFLSVLIVNQTLADGRSNWMEGMVLMMLYIIIAVSFWYYPGSTTATLLGCQDSSSVTG.

Positions 1–110 (MSPPRRVSFP…NSLDPNPGLM (110 aa)) are disordered. Residues 1-137 (MSPPRRVSFP…PTYWGSMKAA (137 aa)) are Cytoplasmic-facing. Over residues 18–30 (PPLADSPLSSPKL) the composition is skewed to low complexity. The segment covering 36–56 (QSSSTPIVSSNLPTDTTNSAS) has biased composition (polar residues). The helical transmembrane segment at 138–158 (ITSTWLNVLLVFIPIGWALYL) threads the bilayer. At 159–170 (AKHNGGKDSISD) the chain is on the vacuolar side. Residues 171 to 191 (TAVFCCTFIAIIPLAGLLGFA) traverse the membrane as a helical segment. The Cytoplasmic segment spans residues 192–204 (TEEAALRLGQTLG). Residues 205–225 (GLLNATLGNAVELIVAILALI) form a helical membrane-spanning segment. Residues 226–236 (KCELQVVQSSL) lie on the Vacuolar side of the membrane. A helical transmembrane segment spans residues 237–257 (VGSILSNILLVLGMCFFAGGV). Residues 258 to 272 (RFAEQAIKSTAAQLN) lie on the Cytoplasmic side of the membrane. Residues 273–293 (ASLLLIAVIAVLIPSAFHFSI) form a helical membrane-spanning segment. The Vacuolar segment spans residues 294 to 313 (SSSTSNTDASELANGEGADL). Residues 314–334 (LSMSHAVSILLLILYLGYLLF) form a helical membrane-spanning segment. At 335–437 (QMWTHATYYV…EEEEETPQMN (103 aa)) the chain is on the cytoplasmic side. The interval 376 to 434 (DEEESYSTATTVSDAAVPPSARAEGGEVPATHGPGTAAAETGNRVEHEDAEEEEEEETP) is disordered. The segment covering 423–433 (EDAEEEEEEET) has biased composition (acidic residues). A helical transmembrane segment spans residues 438–458 (VVCTIALMVIDTVLVGVTAEF). Residues 459–477 (LVDSINGMVESNPSLSAEW) lie on the Vacuolar side of the membrane. A helical membrane pass occupies residues 478–498 (VGLILLPIVGNAAEHFTAVSV). The Cytoplasmic portion of the chain corresponds to 499–505 (SVKDKLD). Residues 506–526 (LSISVAVGSSIQIALFVIPVI) form a helical membrane-spanning segment. At 527-535 (ELLAWTIGK) the chain is on the vacuolar side. The helical transmembrane segment at 536 to 556 (PMTLLFDPYESIVLFLSVLIV) threads the bilayer. Residues 557-566 (NQTLADGRSN) lie on the Cytoplasmic side of the membrane. A helical transmembrane segment spans residues 567–587 (WMEGMVLMMLYIIIAVSFWYY). Topologically, residues 588–606 (PGSTTATLLGCQDSSSVTG) are vacuolar.

The protein belongs to the Ca(2+):cation antiporter (CaCA) (TC 2.A.19) family.

The protein localises to the vacuole membrane. Has a role in promoting intracellular calcium ion sequestration via the exchange of calcium ions for hydrogen ions across the vacuolar membrane. In Cryptococcus neoformans var. grubii serotype A (strain H99 / ATCC 208821 / CBS 10515 / FGSC 9487) (Filobasidiella neoformans var. grubii), this protein is Vacuolar calcium ion transporter.